The following is a 401-amino-acid chain: Cysteine desulfurase CsdA (401 aa).

K222 carries the post-translational modification N6-(pyridoxal phosphate)lysine. C358 serves as the catalytic Cysteine persulfide intermediate.

Belongs to the class-V pyridoxal-phosphate-dependent aminotransferase family. Csd subfamily. In terms of assembly, homodimer. Forms a heterodimer with CsdE. Pyridoxal 5'-phosphate serves as cofactor.

The catalysed reaction is (sulfur carrier)-H + L-cysteine = (sulfur carrier)-SH + L-alanine. It carries out the reaction L-selenocysteine + AH2 = hydrogenselenide + L-alanine + A + H(+). It catalyses the reaction 3-sulfino-L-alanine + H2O = sulfite + L-alanine + H(+). Cysteine desulfurase activity is increased 2-fold in the presence of CsdE. Functionally, catalyzes the removal of elemental sulfur and selenium atoms from L-cysteine, L-cystine, L-selenocysteine, and L-selenocystine to produce L-alanine, and transiently retains the released sulfur atom on a cysteine residue, in the form of a persulfide. Can also desulfinate L-cysteine sulfinate (3-sulfino-L-alanine), which is the best substrate of the enzyme. Functions as a selenium delivery protein in the pathway for the biosynthesis of selenophosphate. Seems to participate in Fe/S biogenesis by recruiting the SufBCD-SufE proteins. Transfers sulfur to CsdE that increases the cysteine desulfurase activity of CsdA. Can also transfer sulfur directly to TcdA/CsdL in vitro. Appears to support the function of TcdA in the generation of cyclic threonylcarbamoyladenosine at position 37 (ct(6)A37) in tRNAs that read codons beginning with adenine. This Escherichia coli (strain K12) protein is Cysteine desulfurase CsdA (csdA).